A 142-amino-acid chain; its full sequence is Hemoglobin subunit alpha (142 aa).

Residues K2 to R142 form the Globin domain. H59 serves as a coordination point for O2. H88 provides a ligand contact to heme b.

The protein belongs to the globin family. As to quaternary structure, heterotetramer of two alpha chains and two beta chains. In terms of tissue distribution, red blood cells.

Involved in oxygen transport from the lung to the various peripheral tissues. The chain is Hemoglobin subunit alpha (HBA) from Taricha granulosa (Roughskin newt).